The sequence spans 265 residues: MLVPMSEGDTSELDHDADHLAEGDERYLLRNKRQIRGLLQQLIDQRAVVTMHVAGRDMAVPTAVLEVDEDDDYVILDGSHNDASNRAIEQAKYLLCYAQLERVNIRFRLETPERLERDIHVAFRATLPDSLYHLQRRESYRLETPITDSPTCTIRQDAASGGNLNLQLRVIDISSGGLAVSLATGMPLLEPQHTYRDCTLQLPDSAPIALPLTVCSQYKMTLPNGSEGFRVGMQFSDLPRGADETIQRYIFRVDRQRNARKSGVF.

One can recognise a PilZ domain in the interval 135–252 (QRRESYRLET…DETIQRYIFR (118 aa)).

This sequence belongs to the YcgR family. As to quaternary structure, monomer. Interacts with the flagellar basal bodies.

The protein localises to the bacterial flagellum basal body. In terms of biological role, acts as a flagellar brake, regulating swimming and swarming in a bis-(3'-5') cyclic diguanylic acid (c-di-GMP)-dependent manner. Binds 1 c-di-GMP dimer per subunit. Increasing levels of c-di-GMP lead to decreased motility. The protein is Flagellar brake protein YcgR of Xanthomonas campestris pv. campestris (strain B100).